Reading from the N-terminus, the 189-residue chain is Elongation factor P (189 aa).

K34 bears the N6-(3,6-diaminohexanoyl)-5-hydroxylysine mark.

This sequence belongs to the elongation factor P family. In terms of processing, may be beta-lysylated on the epsilon-amino group of Lys-34 by the combined action of EpmA and EpmB, and then hydroxylated on the C5 position of the same residue by EpmC (if this protein is present). Lysylation is critical for the stimulatory effect of EF-P on peptide-bond formation. The lysylation moiety may extend toward the peptidyltransferase center and stabilize the terminal 3-CCA end of the tRNA. Hydroxylation of the C5 position on Lys-34 may allow additional potential stabilizing hydrogen-bond interactions with the P-tRNA.

Its subcellular location is the cytoplasm. It functions in the pathway protein biosynthesis; polypeptide chain elongation. Its function is as follows. Involved in peptide bond synthesis. Alleviates ribosome stalling that occurs when 3 or more consecutive Pro residues or the sequence PPG is present in a protein, possibly by augmenting the peptidyl transferase activity of the ribosome. Modification of Lys-34 is required for alleviation. The protein is Elongation factor P of Teredinibacter turnerae (strain ATCC 39867 / T7901).